The following is a 91-amino-acid chain: Lipolysis-activating peptide 1-alpha chain (91 aa).

The N-terminal stretch at 1–22 (MMKLVLFGIIVILFSLIGSIHG) is a signal peptide. In terms of domain architecture, LCN-type CS-alpha/beta spans 24-87 (SGNYPLNPYG…VWNAVKKHCK (64 aa)). 3 disulfide bridges follow: Cys38–Cys61, Cys47–Cys66, and Cys51–Cys68.

The protein belongs to the long (3 C-C) scorpion toxin superfamily. In terms of assembly, monomer (edited version) and heterodimer (non-edited version) of this alpha chain and a beta chain (AC P84809). In terms of tissue distribution, expressed by the venom gland.

Its subcellular location is the secreted. In terms of biological role, the heterodimer non-edited LVP1 induces lipolysis in rat adipocytes. Induction of lipolysis by LVP1 appears to be mediated through the beta-2 adrenergic receptor pathway (ADRB2). Intracerebroventricular injection is not toxic to mice. Functionally, the edited BmKBTx-like, similar to beta-toxins, may modulate voltage-gated sodium channels (Nav) and may block voltage-gated potassium channels (Kv). This chain is Lipolysis-activating peptide 1-alpha chain, found in Buthus occitanus tunetanus (Common European scorpion).